The primary structure comprises 1188 residues: DNA-directed RNA polymerase subunit beta (1188 aa).

This sequence belongs to the RNA polymerase beta chain family. As to quaternary structure, the RNAP catalytic core consists of 2 alpha, 1 beta, 1 beta' and 1 omega subunit. When a sigma factor is associated with the core the holoenzyme is formed, which can initiate transcription.

It carries out the reaction RNA(n) + a ribonucleoside 5'-triphosphate = RNA(n+1) + diphosphate. Its function is as follows. DNA-dependent RNA polymerase catalyzes the transcription of DNA into RNA using the four ribonucleoside triphosphates as substrates. The sequence is that of DNA-directed RNA polymerase subunit beta from Streptococcus pyogenes serotype M1.